The following is a 540-amino-acid chain: Putative cysteine ligase BshC (540 aa).

A coiled-coil region spans residues 455 to 491 (GKENLKRLIRVVNSFEEKVKQRHRKNNQVAIQQLQKI).

This sequence belongs to the BshC family.

In terms of biological role, involved in bacillithiol (BSH) biosynthesis. May catalyze the last step of the pathway, the addition of cysteine to glucosamine malate (GlcN-Mal) to generate BSH. This Desulforamulus reducens (strain ATCC BAA-1160 / DSM 100696 / MI-1) (Desulfotomaculum reducens) protein is Putative cysteine ligase BshC.